The chain runs to 293 residues: 4-hydroxy-tetrahydrodipicolinate synthase (293 aa).

Serine 45 is a binding site for pyruvate. Tyrosine 133 serves as the catalytic Proton donor/acceptor. The active-site Schiff-base intermediate with substrate is lysine 161. Isoleucine 203 is a binding site for pyruvate.

The protein belongs to the DapA family. Homotetramer; dimer of dimers.

The protein localises to the cytoplasm. The catalysed reaction is L-aspartate 4-semialdehyde + pyruvate = (2S,4S)-4-hydroxy-2,3,4,5-tetrahydrodipicolinate + H2O + H(+). The protein operates within amino-acid biosynthesis; L-lysine biosynthesis via DAP pathway; (S)-tetrahydrodipicolinate from L-aspartate: step 3/4. Catalyzes the condensation of (S)-aspartate-beta-semialdehyde [(S)-ASA] and pyruvate to 4-hydroxy-tetrahydrodipicolinate (HTPA). This chain is 4-hydroxy-tetrahydrodipicolinate synthase, found in Psychromonas ingrahamii (strain DSM 17664 / CCUG 51855 / 37).